A 95-amino-acid chain; its full sequence is Cell division protein FtsB (95 aa).

At 1-3 (MRW) the chain is on the cytoplasmic side. The helical transmembrane segment at 4–21 (VLAGLTALLLWLQGLLWF) threads the bilayer. Over 22-95 (GEGGLNDVRG…QIIEREDDAR (74 aa)) the chain is Periplasmic. Residues 26 to 76 (LNDVRGLSRSVEAQREEVDRLRQRNQALEAEVNDLKTGLEALEERARSELG) are a coiled coil.

Belongs to the FtsB family. As to quaternary structure, part of a complex composed of FtsB, FtsL and FtsQ.

It localises to the cell inner membrane. Essential cell division protein. May link together the upstream cell division proteins, which are predominantly cytoplasmic, with the downstream cell division proteins, which are predominantly periplasmic. The chain is Cell division protein FtsB from Alkalilimnicola ehrlichii (strain ATCC BAA-1101 / DSM 17681 / MLHE-1).